We begin with the raw amino-acid sequence, 183 residues long: Glutamyl-tRNA(Gln) amidotransferase subunit F, mitochondrial (183 aa).

It belongs to the GatF family. Subunit of the heterotrimeric GatFAB amidotransferase (AdT) complex, composed of A (HER2), B (PET112) and F (YGR102C) subunits.

Its subcellular location is the mitochondrion inner membrane. The enzyme catalyses L-glutamyl-tRNA(Gln) + L-glutamine + ATP + H2O = L-glutaminyl-tRNA(Gln) + L-glutamate + ADP + phosphate + H(+). In terms of biological role, allows the formation of correctly charged Gln-tRNA(Gln) through the transamidation of misacylated Glu-tRNA(Gln) in the mitochondria. The reaction takes place in the presence of glutamine and ATP through an activated gamma-phospho-Glu-tRNA(Gln). Required for proper protein synthesis within the mitochondrion. This chain is Glutamyl-tRNA(Gln) amidotransferase subunit F, mitochondrial, found in Saccharomyces cerevisiae (strain ATCC 204508 / S288c) (Baker's yeast).